Consider the following 91-residue polypeptide: Small ribosomal subunit protein uS15 (91 aa).

Belongs to the universal ribosomal protein uS15 family. Part of the 30S ribosomal subunit. Forms a bridge to the 50S subunit in the 70S ribosome, contacting the 23S rRNA.

Functionally, one of the primary rRNA binding proteins, it binds directly to 16S rRNA where it helps nucleate assembly of the platform of the 30S subunit by binding and bridging several RNA helices of the 16S rRNA. Forms an intersubunit bridge (bridge B4) with the 23S rRNA of the 50S subunit in the ribosome. This chain is Small ribosomal subunit protein uS15, found in Rickettsia africae (strain ESF-5).